A 130-amino-acid chain; its full sequence is Anti-adapter protein IraD (130 aa).

This sequence belongs to the GpW/Gp25 family. IraD subfamily. Interacts with RssB.

The protein resides in the cytoplasm. Its function is as follows. Inhibits RpoS proteolysis by regulating RssB activity, thereby increasing the stability of the sigma stress factor RpoS during oxidative stress. Its effect on RpoS stability is due to its interaction with RssB, which probably blocks the interaction of RssB with RpoS, and the consequent delivery of the RssB-RpoS complex to the ClpXP protein degradation pathway. This chain is Anti-adapter protein IraD, found in Escherichia coli O9:H4 (strain HS).